A 523-amino-acid polypeptide reads, in one-letter code: Sorting nexin-2 (523 aa).

A disordered region spans residues 1-104; sequence MAAEREPPPL…EPSPAVTPVT (104 aa). Low complexity-rich tracts occupy residues 27–50 and 93–104; these read LFTSTVSTLESSPSSPEPASLPAE and SSEPSPAVTPVT. Serine 97 carries the post-translational modification Phosphoserine. A phosphothreonine mark is found at threonine 101 and threonine 104. Phosphoserine occurs at positions 117 and 119. Residues 140 to 269 form the PX domain; it reads FDIEIGVSDP…QFLESSELPR (130 aa). Arginine 183, serine 185, lysine 211, and arginine 235 together coordinate a 1,2-diacyl-sn-glycero-3-phospho-(1D-myo-inositol-3-phosphate). Position 185 is a phosphoserine (serine 185). The segment at 260–523 is interaction with RhoG; sequence QFLESSELPR…AFLPEAKAIA (264 aa). Position 277 is a phosphoserine (serine 277). The membrane-binding amphipathic helix stretch occupies residues 278-295; the sequence is GAGILRMVNKAADAVNKM. A BAR domain is found at 299–523; sequence MNESDAWFEE…AFLPEAKAIA (225 aa). Lysine 473 is subject to N6-acetyllysine.

This sequence belongs to the sorting nexin family. Predominantly forms heterodimers with BAR domain-containing sorting nexins SNX5, SNX6 and SNX32; can self-associate to form homodimers. The heterodimers are proposed to self-assemble into helical arrays on the membrane to stabilize and expand local membrane curvature underlying endosomal tubule formation. Thought to be a component of the originally described retromer complex (also called SNX-BAR retromer) which is a pentamer containing the heterotrimeric retromer cargo-selective complex (CSC), also described as vacuolar protein sorting subcomplex (VPS), and a heterodimeric membrane-deforming subcomplex formed between SNX1 or SNX2 and SNX5 or SNX6 (also called SNX-BAR subcomplex); the respective CSC and SNX-BAR subcomplexes associate with low affinity. Interacts with SNX5, SNX6, SNX32, VPS26A, VPS29, VPS35, FNBP1, KALRN, RHOG (GDP-bound form).

The protein resides in the early endosome membrane. It is found in the cell projection. It localises to the lamellipodium. Involved in several stages of intracellular trafficking. Interacts with membranes containing phosphatidylinositol 3-phosphate (PtdIns(3P)) or phosphatidylinositol 3,5-bisphosphate (PtdIns(3,5)P2). Acts in part as component of the retromer membrane-deforming SNX-BAR subcomplex. The SNX-BAR retromer mediates retrograde transport of cargo proteins from endosomes to the trans-Golgi network (TGN) and is involved in endosome-to-plasma membrane transport for cargo protein recycling. The SNX-BAR subcomplex functions to deform the donor membrane into a tubular profile called endosome-to-TGN transport carrier (ETC). Can sense membrane curvature and has in vitro vesicle-to-membrane remodeling activity. Required for retrograde endosome-to-TGN transport of TGN38. Promotes KALRN- and RHOG-dependent but retromer-independent membrane remodeling such as lamellipodium formation; the function is dependent on GEF activity of KALRN. This is Sorting nexin-2 (SNX2) from Macaca fascicularis (Crab-eating macaque).